The sequence spans 73 residues: UPF0346 protein SAS1364 (73 aa).

Belongs to the UPF0346 family.

This Staphylococcus aureus (strain MSSA476) protein is UPF0346 protein SAS1364.